A 231-amino-acid polypeptide reads, in one-letter code: Orotidine 5'-phosphate decarboxylase (231 aa).

Residues Asp-11, Lys-33, 60–69 (DLKFHDIPNT), Thr-120, Arg-181, Gln-190, Gly-210, and Arg-211 contribute to the substrate site. Lys-62 functions as the Proton donor in the catalytic mechanism.

This sequence belongs to the OMP decarboxylase family. Type 1 subfamily. As to quaternary structure, homodimer.

The catalysed reaction is orotidine 5'-phosphate + H(+) = UMP + CO2. It functions in the pathway pyrimidine metabolism; UMP biosynthesis via de novo pathway; UMP from orotate: step 2/2. Functionally, catalyzes the decarboxylation of orotidine 5'-monophosphate (OMP) to uridine 5'-monophosphate (UMP). This is Orotidine 5'-phosphate decarboxylase from Shewanella oneidensis (strain ATCC 700550 / JCM 31522 / CIP 106686 / LMG 19005 / NCIMB 14063 / MR-1).